The chain runs to 113 residues: Class I hydrophobin fvh1 (113 aa).

A signal peptide spans 1–20 (MVSFRAFTVAASLFATLAAA). Disulfide bonds link cysteine 34–cysteine 94, cysteine 41–cysteine 88, cysteine 42–cysteine 75, and cysteine 95–cysteine 108. An N-linked (GlcNAc...) asparagine glycan is attached at asparagine 35. Residue asparagine 97 is glycosylated (N-linked (GlcNAc...) asparagine).

This sequence belongs to the fungal hydrophobin family. Self-assembles to form functional amyloid fibrils called rodlets. Self-assembly into fibrillar rodlets occurs spontaneously at hydrophobic:hydrophilic interfaces and the rodlets further associate laterally to form amphipathic monolayers.

It localises to the secreted. It is found in the cell wall. In terms of biological role, aerial growth, conidiation, and dispersal of filamentous fungi in the environment rely upon a capability of their secreting small amphipathic proteins called hydrophobins (HPBs) with low sequence identity. Class I can self-assemble into an outermost layer of rodlet bundles on aerial cell surfaces, conferring cellular hydrophobicity that supports fungal growth, development and dispersal; whereas Class II form highly ordered films at water-air interfaces through intermolecular interactions but contribute nothing to the rodlet structure. Fvh1 is a class I hydrophobin involved in fruiting body initiation. The polypeptide is Class I hydrophobin fvh1 (Flammulina velutipes (Agaricus velutipes)).